The sequence spans 252 residues: 3-deoxy-manno-octulosonate cytidylyltransferase (252 aa).

The protein belongs to the KdsB family.

It localises to the cytoplasm. The catalysed reaction is 3-deoxy-alpha-D-manno-oct-2-ulosonate + CTP = CMP-3-deoxy-beta-D-manno-octulosonate + diphosphate. It participates in nucleotide-sugar biosynthesis; CMP-3-deoxy-D-manno-octulosonate biosynthesis; CMP-3-deoxy-D-manno-octulosonate from 3-deoxy-D-manno-octulosonate and CTP: step 1/1. It functions in the pathway bacterial outer membrane biogenesis; lipopolysaccharide biosynthesis. Activates KDO (a required 8-carbon sugar) for incorporation into bacterial lipopolysaccharide in Gram-negative bacteria. The chain is 3-deoxy-manno-octulosonate cytidylyltransferase from Vibrio cholerae serotype O1 (strain ATCC 39315 / El Tor Inaba N16961).